Reading from the N-terminus, the 529-residue chain is MLMLLVRGTHYESLRSKVVLPTPLGGRSTEALVSECPIPDTGIRWRQSDEALRVNVGGVRRLLSARALARFPGTRLGRLQAAASEEQARRLCDDYDAAAHEFYFDRHPGFFLGLLHFYRTGHLHVLDELCVFAFGQEADYWGLGENALAACCRARYLERRLTQPRAWDEDSDTPSSVDPCPDEISDVQRELARYGAARCGRLRRRLWLTMENPGYSLPSKLFSCVSISVVLASIAAMCIHSLPEYQAREAAAAVAAVAAGRSPEGVRDDPVLRRLEYFCIAWFSFEVSSRLLLAPSTRNFFCHPLNLIDIVSVLPFYLTLLAGVALGDQGGTGGKELGHLGKVVQVFRLMRIFRVLKLARHSTGLRSLGATLKHSYREVGILLLYLAVGVSVFSGVAYTAEKEEDVGFNTIPACWWWGTVSMTTVGYGDVVPVTVAGKLAASGCILGGILVVALPITIIFNKFSHFYRRQKALEAAVRNSNHQEFEDLLSSVDAVSEASLETSRETSQEGRSADLETQAPSEPPHPQMY.

The Cytoplasmic portion of the chain corresponds to 1 to 217 (MLMLLVRGTH…LTMENPGYSL (217 aa)). A helical transmembrane segment spans residues 218–239 (PSKLFSCVSISVVLASIAAMCI). Over 240–270 (HSLPEYQAREAAAAVAAVAAGRSPEGVRDDP) the chain is Extracellular. A helical membrane pass occupies residues 271–293 (VLRRLEYFCIAWFSFEVSSRLLL). The Cytoplasmic portion of the chain corresponds to 294-304 (APSTRNFFCHP). The chain crosses the membrane as a helical span at residues 305 to 322 (LNLIDIVSVLPFYLTLLA). The Extracellular segment spans residues 323–340 (GVALGDQGGTGGKELGHL). The chain crosses the membrane as a helical; Voltage-sensor span at residues 341–361 (GKVVQVFRLMRIFRVLKLARH). Residues 362–376 (STGLRSLGATLKHSY) lie on the Cytoplasmic side of the membrane. A helical transmembrane segment spans residues 377–398 (REVGILLLYLAVGVSVFSGVAY). At 399–411 (TAEKEEDVGFNTI) the chain is on the extracellular side. An intramembrane region (helical) is located at residues 412-423 (PACWWWGTVSMT). A Selectivity filter motif is present at residues 424–429 (TVGYGD). The stretch at 424–431 (TVGYGDVV) is an intramembrane region. Residues 432–438 (PVTVAGK) lie on the Extracellular side of the membrane. A helical transmembrane segment spans residues 439 to 467 (LAASGCILGGILVVALPITIIFNKFSHFY). Topologically, residues 468–529 (RRQKALEAAV…PSEPPHPQMY (62 aa)) are cytoplasmic. Residues 496-529 (SEASLETSRETSQEGRSADLETQAPSEPPHPQMY) form a disordered region. Residues 502-514 (TSRETSQEGRSAD) are compositionally biased toward basic and acidic residues.

The protein belongs to the potassium channel family. S (TC 1.A.1.2) subfamily. Kv9.1/KCNS1 sub-subfamily. As to quaternary structure, heterotetramer with KCNB1. Heterotetramer with KCNB2. Does not form homomultimers.

The protein localises to the cell membrane. Functionally, potassium channel regulatory subunit that modulate the delayed rectifier voltage-gated potassium channel activity of KCNB1 and KCNB2 by altering their kinetics, expression levels, and shifting the half-inactivation potential to more polarized values. While it does not form functional channels on its own, it can form functional heterotetrameric channels with KCNB1 and KCNB2. Each regulatory subunit has unique regulatory properties that can lead to extensive inhibition, significant changes in kinetics, and/or substantial shifts in the voltage dependencies of the inactivation process. This is Delayed-rectifier potassium channel regulatory subunit KCNS1 from Papio anubis (Olive baboon).